The chain runs to 190 residues: MSIKEDKWIREMALNADMIHPFVNGQVNVNEETGEKLISYGLSSYGYDLRLSREFKVFTNVYNSVVDPKCFTEDIFISITDDVCIVPPNSFALARSVEYFRIPRNVLTMCIGKSTYARCGIIVNVTPFEPEWEGHVTIEISNTTPLPAKIYANEGIAQVLFFESSTTCEVSYADRKGKYQKQQGITVPCV.

Position 113 to 118 (K113 to R118) interacts with dCTP. The active-site Proton donor/acceptor is the E139. Positions 158, 172, 181, and 182 each coordinate dCTP.

It belongs to the dCTP deaminase family. In terms of assembly, homotrimer.

It carries out the reaction dCTP + H2O + H(+) = dUTP + NH4(+). The protein operates within pyrimidine metabolism; dUMP biosynthesis; dUMP from dCTP (dUTP route): step 1/2. Its function is as follows. Catalyzes the deamination of dCTP to dUTP. The sequence is that of dCTP deaminase from Chlamydia pneumoniae (Chlamydophila pneumoniae).